We begin with the raw amino-acid sequence, 74 residues long: Kappa-scoloptoxin(07)-Ssm2c (74 aa).

Positions 1–19 (MLVFYAPLFVSIFSNTVMG) are cleaved as a signal peptide. A propeptide spanning residues 20–41 (ATIDKPIPKPILREAIEKIAVN) is cleaved from the precursor.

Belongs to the scoloptoxin-07 family. In terms of processing, contains 3 disulfide bonds. In terms of tissue distribution, expressed by the venom gland.

It localises to the secreted. Functionally, inhibits voltage-gated potassium channels. This chain is Kappa-scoloptoxin(07)-Ssm2c, found in Scolopendra mutilans (Chinese red-headed centipede).